The following is an 89-amino-acid chain: Small ribosomal subunit protein uS15 (89 aa).

The protein belongs to the universal ribosomal protein uS15 family. In terms of assembly, part of the 30S ribosomal subunit. Forms a bridge to the 50S subunit in the 70S ribosome, contacting the 23S rRNA.

One of the primary rRNA binding proteins, it binds directly to 16S rRNA where it helps nucleate assembly of the platform of the 30S subunit by binding and bridging several RNA helices of the 16S rRNA. In terms of biological role, forms an intersubunit bridge (bridge B4) with the 23S rRNA of the 50S subunit in the ribosome. In Chlorobium chlorochromatii (strain CaD3), this protein is Small ribosomal subunit protein uS15.